We begin with the raw amino-acid sequence, 243 residues long: tRNA (guanine-N(1)-)-methyltransferase (243 aa).

S-adenosyl-L-methionine-binding positions include glycine 111 and 131 to 136 (IGDYVL).

The protein belongs to the RNA methyltransferase TrmD family. Homodimer.

It localises to the cytoplasm. It catalyses the reaction guanosine(37) in tRNA + S-adenosyl-L-methionine = N(1)-methylguanosine(37) in tRNA + S-adenosyl-L-homocysteine + H(+). Specifically methylates guanosine-37 in various tRNAs. The polypeptide is tRNA (guanine-N(1)-)-methyltransferase (Brevibacillus brevis (strain 47 / JCM 6285 / NBRC 100599)).